We begin with the raw amino-acid sequence, 68 residues long: Putative membrane protein insertion efficiency factor (68 aa).

The protein belongs to the UPF0161 family.

It is found in the cell inner membrane. In terms of biological role, could be involved in insertion of integral membrane proteins into the membrane. The chain is Putative membrane protein insertion efficiency factor from Aquifex aeolicus (strain VF5).